Here is a 225-residue protein sequence, read N- to C-terminus: Imidazole glycerol phosphate synthase subunit HisH (225 aa).

The Glutamine amidotransferase type-1 domain occupies 3–225 (TIAIVDYGMG…LYRNFVDWQP (223 aa)). Cys82 (nucleophile) is an active-site residue. Active-site residues include His205 and Glu207.

Heterodimer of HisH and HisF.

It is found in the cytoplasm. It catalyses the reaction 5-[(5-phospho-1-deoxy-D-ribulos-1-ylimino)methylamino]-1-(5-phospho-beta-D-ribosyl)imidazole-4-carboxamide + L-glutamine = D-erythro-1-(imidazol-4-yl)glycerol 3-phosphate + 5-amino-1-(5-phospho-beta-D-ribosyl)imidazole-4-carboxamide + L-glutamate + H(+). The catalysed reaction is L-glutamine + H2O = L-glutamate + NH4(+). The protein operates within amino-acid biosynthesis; L-histidine biosynthesis; L-histidine from 5-phospho-alpha-D-ribose 1-diphosphate: step 5/9. In terms of biological role, IGPS catalyzes the conversion of PRFAR and glutamine to IGP, AICAR and glutamate. The HisH subunit catalyzes the hydrolysis of glutamine to glutamate and ammonia as part of the synthesis of IGP and AICAR. The resulting ammonia molecule is channeled to the active site of HisF. In Bordetella bronchiseptica (strain ATCC BAA-588 / NCTC 13252 / RB50) (Alcaligenes bronchisepticus), this protein is Imidazole glycerol phosphate synthase subunit HisH.